A 420-amino-acid polypeptide reads, in one-letter code: ATP phosphoribosyltransferase regulatory subunit (420 aa).

The protein belongs to the class-II aminoacyl-tRNA synthetase family. HisZ subfamily. Heteromultimer composed of HisG and HisZ subunits.

Its subcellular location is the cytoplasm. It participates in amino-acid biosynthesis; L-histidine biosynthesis; L-histidine from 5-phospho-alpha-D-ribose 1-diphosphate: step 1/9. Required for the first step of histidine biosynthesis. May allow the feedback regulation of ATP phosphoribosyltransferase activity by histidine. This Bacillus cereus (strain ZK / E33L) protein is ATP phosphoribosyltransferase regulatory subunit.